The sequence spans 142 residues: Ribosome-binding factor A (142 aa).

Basic and acidic residues predominate over residues 120 to 130; it reads EVRRDIDHAPA. A disordered region spans residues 120 to 142; it reads EVRRDIDHAPAEDEFPTDGDDGQ. Residues 131-142 show a composition bias toward acidic residues; the sequence is EDEFPTDGDDGQ.

It belongs to the RbfA family. In terms of assembly, monomer. Binds 30S ribosomal subunits, but not 50S ribosomal subunits or 70S ribosomes.

The protein localises to the cytoplasm. Its function is as follows. One of several proteins that assist in the late maturation steps of the functional core of the 30S ribosomal subunit. Associates with free 30S ribosomal subunits (but not with 30S subunits that are part of 70S ribosomes or polysomes). Required for efficient processing of 16S rRNA. May interact with the 5'-terminal helix region of 16S rRNA. This Paramagnetospirillum magneticum (strain ATCC 700264 / AMB-1) (Magnetospirillum magneticum) protein is Ribosome-binding factor A.